Reading from the N-terminus, the 703-residue chain is MEKPRGTEEAPSSEPMEEEEEDDLDLFGGYDSFRSYNSSAGSESSSYLEESSEAENEDREAGELPTSPLHLFSSANNRSLDGSGSEPAVCEMCGIVGTREAFFSKTKRFCSVSCSRSYSSNSKKASILARLQGKPPTKKAKVLHKAAWSAKIGAFLHAQGTGQLADGTPTGQDALVLGFDWGKFLKDHSYKAAPVSCFKHVPLYDQWEDVMKGMKVEVLNSDAVLPSRVYWIATVIQAAGYRVLLRYEGFENDASHDFWCNLGTVDVHPIGWCAINSKILVPPRTIHAKFTDWKSYLMKRLVGSRTLPADFHIKMVESMKYPFRQGMRLEVVDKTQVSRTRMAVVDTVIGGRLRLLYEDGDSDDDFWCHMWSPLIHPVGWSRRVGHGIKMSDRRCDMSHHPTFRKIYCDAVPYLFKKVRAVYTEGGWFEEGMKLEAIDPLNLGSICVATICKVLLDGYLMICVDGGPSTDGSDWFCYHASSHAIFPATFCQKNDIELTPPKGYETQPFAWETYLEKTKSKAAPARLFNMDCPNHGFKVGMKLEAVDLMEPRLICVATVKRVVHRLLSIHFDGWDNEYDQWVDCESPDIYPVGWCELTGYQLQPPVSAEPNTPQKGKDTTKKKKKQFGKKRKRIPSAKTRPLRQGSKKPLLEDNLEALGVSEPVPDDIIAVCVKEEHQDISSLDRSPSPQLPLPIESIKQERNN.

Residues 1 to 85 (MEKPRGTEEA…NNRSLDGSGS (85 aa)) form a disordered region. A Phosphoserine modification is found at S13. Residues 15–25 (PMEEEEEDDLD) show a composition bias toward acidic residues. Residues 35–49 (SYNSSAGSESSSYLE) show a composition bias toward low complexity. Residues 50-60 (ESSEAENEDRE) show a composition bias toward acidic residues. S67 carries the phosphoserine modification. Over residues 73–82 (SSANNRSLDG) the composition is skewed to polar residues. The FCS-type zinc-finger motif lies at 81-116 (DGSGSEPAVCEMCGIVGTREAFFSKTKRFCSVSCSR). Residues C90, C93, C110, and C114 each contribute to the Zn(2+) site. MBT repeat units lie at residues 179-283 (FDWG…LVPP), 291-391 (TDWK…IKMS), 397-500 (MSHH…LTPP), and 508-604 (FAWE…LQPP). S338 bears the Phosphoserine mark. K405 is covalently cross-linked (Glycyl lysine isopeptide (Lys-Gly) (interchain with G-Cter in SUMO2)). Residues 604–649 (PVSAEPNTPQKGKDTTKKKKKQFGKKRKRIPSAKTRPLRQGSKKPL) are disordered. A compositionally biased stretch (basic residues) spans 619 to 634 (TKKKKKQFGKKRKRIP). Glycyl lysine isopeptide (Lys-Gly) (interchain with G-Cter in SUMO2) cross-links involve residues K647 and K673. The segment at 675-703 (EHQDISSLDRSPSPQLPLPIESIKQERNN) is disordered. Phosphoserine occurs at positions 681, 685, and 687. Residue K698 forms a Glycyl lysine isopeptide (Lys-Gly) (interchain with G-Cter in SUMO1); alternate linkage. A Glycyl lysine isopeptide (Lys-Gly) (interchain with G-Cter in SUMO2); alternate cross-link involves residue K698.

In terms of assembly, part of the E2F6.com-1 complex in G0 phase composed of E2F6, MGA, MAX, TFDP1, CBX3, BAT8, EUHMTASE1, RING1, RNF2, MBLR, BAT8 and YAF2. Phosphorylated. In terms of tissue distribution, ubiquitous.

Its subcellular location is the nucleus. Putative Polycomb group (PcG) protein. PcG proteins maintain the transcriptionally repressive state of genes, probably via a modification of chromatin, rendering it heritably changed in its expressibility. Its association with a chromatin-remodeling complex suggests that it may contribute to prevent expression of genes that trigger the cell into mitosis. Binds to monomethylated and dimethylated 'Lys-20' on histone H4. Binds histone H3 peptides that are monomethylated or dimethylated on 'Lys-4', 'Lys-9' or 'Lys-27'. The polypeptide is Lethal(3)malignant brain tumor-like protein 2 (L3mbtl2) (Mus musculus (Mouse)).